The sequence spans 142 residues: Putative pre-16S rRNA nuclease (142 aa).

The protein belongs to the YqgF nuclease family.

Its subcellular location is the cytoplasm. In terms of biological role, could be a nuclease involved in processing of the 5'-end of pre-16S rRNA. This chain is Putative pre-16S rRNA nuclease, found in Chlorobaculum tepidum (strain ATCC 49652 / DSM 12025 / NBRC 103806 / TLS) (Chlorobium tepidum).